The primary structure comprises 750 residues: Putative tyrosine-protein kinase EpsB (750 aa).

Topologically, residues 1–31 (MTQNLPQPPAVNAPENELDLVRYLDVLVANR) are cytoplasmic. A helical transmembrane segment spans residues 32 to 52 (WLIAGIAAAVMLLGAAYAFLA). Topologically, residues 53-444 (RPVYEADIMV…VPEEPVKPKK (392 aa)) are periplasmic. The helical transmembrane segment at 445–465 (LTVTPLAGVLGVVLGVMAAFV) threads the bilayer. Topologically, residues 466 to 750 (RNALFGGITD…NSKPPEAESA (285 aa)) are cytoplasmic.

This sequence belongs to the etk/wzc family.

The protein localises to the cell inner membrane. It catalyses the reaction L-tyrosyl-[protein] + ATP = O-phospho-L-tyrosyl-[protein] + ADP + H(+). Its function is as follows. Probably involved in polymerization and/or export of exopolysaccharide EPS I which functions as a virulence factor. May be involved in an ATP-dependent process in the pathway for EPS I production, possibly export of the trimeric repeat units across the inner membrane or their polymerization. The polypeptide is Putative tyrosine-protein kinase EpsB (epsB) (Ralstonia solanacearum (Pseudomonas solanacearum)).